The primary structure comprises 351 residues: Type II restriction enzyme NmeDI (351 aa).

It catalyses the reaction Endonucleolytic cleavage of DNA to give specific double-stranded fragments with terminal 5'-phosphates.. Its function is as follows. A P subtype restriction enzyme that recognizes the double-stranded sequence 5'-N(12)RCCGGYN(12)-3' and cleaves on both sides of the recognition sequence. The chain is Type II restriction enzyme NmeDI (nmeDIRP) from Neisseria meningitidis serogroup C.